We begin with the raw amino-acid sequence, 281 residues long: E2F-associated phosphoprotein (281 aa).

The residue at position 1 (Met-1) is an N-acetylmethionine. Residues 1-27 (MNRLQDDYDPYAVEEPSDEEPALSSSE) are disordered. Positions 15 to 27 (EPSDEEPALSSSE) are enriched in acidic residues. Position 17 is a phosphoserine (Ser-17). A Phosphothreonine modification is found at Thr-37. Phosphoserine occurs at positions 109 and 111. Positions 222–245 (PENRRKRRSAKKMRSNPEDPAERE) are disordered. Residues 225-235 (RRKRRSAKKMR) are compositionally biased toward basic residues. The span at 236 to 245 (SNPEDPAERE) shows a compositional bias: basic and acidic residues.

In terms of assembly, interacts with E2F1. The C-terminal half binds the N-terminal of E2F1. Also interacts with E2F2 and E2F3, but not E2F4.

The protein localises to the cytoplasm. The protein resides in the nucleus. In terms of biological role, may play an important role in the fine-tuning of both major E2F1 activities, the regulation of the cell-cycle and the induction of apoptosis. Promotes S-phase entry, and inhibits p14(ARP) expression. The polypeptide is E2F-associated phosphoprotein (Eapp) (Mus musculus (Mouse)).